A 368-amino-acid polypeptide reads, in one-letter code: tRNA(Met) cytidine acetate ligase (368 aa).

ATP-binding positions include 7–20, Gly96, Asn152, and Arg175; that span reads IAEF…HKYL.

The protein belongs to the TmcAL family.

Its subcellular location is the cytoplasm. It catalyses the reaction cytidine(34) in elongator tRNA(Met) + acetate + ATP = N(4)-acetylcytidine(34) in elongator tRNA(Met) + AMP + diphosphate. Catalyzes the formation of N(4)-acetylcytidine (ac(4)C) at the wobble position of elongator tRNA(Met), using acetate and ATP as substrates. First activates an acetate ion to form acetyladenylate (Ac-AMP) and then transfers the acetyl group to tRNA to form ac(4)C34. This is tRNA(Met) cytidine acetate ligase from Streptococcus pyogenes serotype M28 (strain MGAS6180).